The primary structure comprises 297 residues: Polyamine aminopropyltransferase 2 (297 aa).

The PABS domain occupies 26-258; the sequence is FYWEPDVEGG…DLWTFFVALK (233 aa). Gln53 contacts S-methyl-5'-thioadenosine. Spermidine contacts are provided by His84 and Glu108. Residues Asp128 and 157–158 each bind S-methyl-5'-thioadenosine; that span reads DV. The active-site Proton acceptor is the Asp176. An S-methyl-5'-thioadenosine-binding site is contributed by Pro184.

The protein belongs to the spermidine/spermine synthase family. As to quaternary structure, homodimer or homotetramer.

It is found in the cytoplasm. It carries out the reaction S-adenosyl 3-(methylsulfanyl)propylamine + putrescine = S-methyl-5'-thioadenosine + spermidine + H(+). Its pathway is amine and polyamine biosynthesis; spermidine biosynthesis; spermidine from putrescine: step 1/1. Its function is as follows. Catalyzes the irreversible transfer of a propylamine group from the amino donor S-adenosylmethioninamine (decarboxy-AdoMet) to putrescine (1,4-diaminobutane) to yield spermidine. In Caldanaerobacter subterraneus subsp. tengcongensis (strain DSM 15242 / JCM 11007 / NBRC 100824 / MB4) (Thermoanaerobacter tengcongensis), this protein is Polyamine aminopropyltransferase 2.